We begin with the raw amino-acid sequence, 474 residues long: PRAME family member 1 (474 aa).

The LRR 1; degenerate repeat unit spans residues 97 to 124 (RWKLQVLDLRDVDENFWARWPGAWALSC). The LRR 2; degenerate repeat unit spans residues 179–203 (HLCCSKLVNYLTPIKYLRKSLKIIY). One copy of the LRR 3; degenerate repeat lies at 204-230 (LNSIQELEIRNMSWPRLIRKLRCYLKE). One copy of the LRR 4; degenerate repeat lies at 231–265 (MKNLRKLVFSRCHHYTSDNELEGRLVAKFSSVFLR). 5 LRR repeats span residues 266–291 (LEHL…IRCL), 292–323 (QNPL…GYLK), 324–342 (HLNL…PLGA), 348–375 (AASL…GLSR), and 376–400 (CSQL…LLRH).

This sequence belongs to the PRAME family.

The polypeptide is PRAME family member 1 (Homo sapiens (Human)).